The following is a 154-amino-acid chain: Large ribosomal subunit protein uL22c (154 aa).

It belongs to the universal ribosomal protein uL22 family. Part of the 50S ribosomal subunit.

The protein resides in the plastid. The protein localises to the chloroplast. This protein binds specifically to 23S rRNA. Functionally, the globular domain of the protein is located near the polypeptide exit tunnel on the outside of the subunit, while an extended beta-hairpin is found that lines the wall of the exit tunnel in the center of the 70S ribosome. The chain is Large ribosomal subunit protein uL22c (rpl22) from Platanus occidentalis (Sycamore).